We begin with the raw amino-acid sequence, 283 residues long: Shikimate dehydrogenase (NADP(+)) (283 aa).

Residues 16–18 and T63 each bind shikimate; that span reads SLS. K67 (proton acceptor) is an active-site residue. D79 provides a ligand contact to NADP(+). Residues N88 and D103 each contribute to the shikimate site. NADP(+) is bound by residues 128-132 and G243; that span reads GAGGA.

The protein belongs to the shikimate dehydrogenase family. As to quaternary structure, homodimer.

The enzyme catalyses shikimate + NADP(+) = 3-dehydroshikimate + NADPH + H(+). The protein operates within metabolic intermediate biosynthesis; chorismate biosynthesis; chorismate from D-erythrose 4-phosphate and phosphoenolpyruvate: step 4/7. Its function is as follows. Involved in the biosynthesis of the chorismate, which leads to the biosynthesis of aromatic amino acids. Catalyzes the reversible NADPH linked reduction of 3-dehydroshikimate (DHSA) to yield shikimate (SA). The polypeptide is Shikimate dehydrogenase (NADP(+)) (Xanthomonas euvesicatoria pv. vesicatoria (strain 85-10) (Xanthomonas campestris pv. vesicatoria)).